Here is a 164-residue protein sequence, read N- to C-terminus: Pyruvoyl-dependent arginine decarboxylase (164 aa).

Ser52 bears the Pyruvic acid (Ser) mark.

This sequence belongs to the PdaD family. It depends on pyruvate as a cofactor.

It catalyses the reaction L-arginine + H(+) = agmatine + CO2. The sequence is that of Pyruvoyl-dependent arginine decarboxylase from Methanococcus maripaludis (strain C7 / ATCC BAA-1331).